An 876-amino-acid polypeptide reads, in one-letter code: Alanine--tRNA ligase (876 aa).

Residues histidine 560, histidine 564, cysteine 662, and histidine 666 each contribute to the Zn(2+) site.

It belongs to the class-II aminoacyl-tRNA synthetase family. Zn(2+) serves as cofactor.

It is found in the cytoplasm. The enzyme catalyses tRNA(Ala) + L-alanine + ATP = L-alanyl-tRNA(Ala) + AMP + diphosphate. Functionally, catalyzes the attachment of alanine to tRNA(Ala) in a two-step reaction: alanine is first activated by ATP to form Ala-AMP and then transferred to the acceptor end of tRNA(Ala). Also edits incorrectly charged Ser-tRNA(Ala) and Gly-tRNA(Ala) via its editing domain. This Synechococcus sp. (strain ATCC 27144 / PCC 6301 / SAUG 1402/1) (Anacystis nidulans) protein is Alanine--tRNA ligase.